We begin with the raw amino-acid sequence, 670 residues long: UvrABC system protein B (670 aa).

The region spanning 51-433 is the Helicase ATP-binding domain; sequence EGLKKREQFQ…SARIVEQIIR (383 aa). Position 64–71 (64–71) interacts with ATP; the sequence is GVTGSGKT. Positions 117-140 match the Beta-hairpin motif; sequence YYDYYQPESYLPAKDQYIEKDAQI. Residues 453-612 form the Helicase C-terminal domain; it reads DVMQEIRKIV…IVPKTIRKPI (160 aa). The UVR domain occupies 631–666; it reads PNVIIELDAEMREAADRLDFERAIQLRELIKKLEKE.

The protein belongs to the UvrB family. In terms of assembly, forms a heterotetramer with UvrA during the search for lesions. Interacts with UvrC in an incision complex.

Its subcellular location is the cytoplasm. The UvrABC repair system catalyzes the recognition and processing of DNA lesions. A damage recognition complex composed of 2 UvrA and 2 UvrB subunits scans DNA for abnormalities. Upon binding of the UvrA(2)B(2) complex to a putative damaged site, the DNA wraps around one UvrB monomer. DNA wrap is dependent on ATP binding by UvrB and probably causes local melting of the DNA helix, facilitating insertion of UvrB beta-hairpin between the DNA strands. Then UvrB probes one DNA strand for the presence of a lesion. If a lesion is found the UvrA subunits dissociate and the UvrB-DNA preincision complex is formed. This complex is subsequently bound by UvrC and the second UvrB is released. If no lesion is found, the DNA wraps around the other UvrB subunit that will check the other stand for damage. The sequence is that of UvrABC system protein B from Methanosarcina acetivorans (strain ATCC 35395 / DSM 2834 / JCM 12185 / C2A).